Here is a 36-residue protein sequence, read N- to C-terminus: Gloverin (36 aa).

The protein resides in the secreted. Antibacterial protein. In Heliothis virescens (Tobacco budworm moth), this protein is Gloverin.